Consider the following 289-residue polypeptide: uncharacterized protein (289 aa).

An N-terminal signal peptide occupies residues 1-23; it reads MIKNYKLLLFTTFTLFFITFVSG. N-linked (GlcNAc...) asparagine glycosylation is found at N74, N101, N132, and N285.

The protein resides in the secreted. This is an uncharacterized protein from Dictyostelium discoideum (Social amoeba).